The chain runs to 176 residues: Small ribosomal subunit protein uS5c (176 aa).

The S5 DRBM domain occupies Leu-26–Leu-89.

It belongs to the universal ribosomal protein uS5 family. As to quaternary structure, part of the 30S ribosomal subunit. Contacts protein S4.

It is found in the plastid. It localises to the chloroplast. With S4 and S12 plays an important role in translational accuracy. This is Small ribosomal subunit protein uS5c (rps5) from Phaeodactylum tricornutum (strain CCAP 1055/1).